A 217-amino-acid chain; its full sequence is Probable transaldolase (217 aa).

Residue K83 is the Schiff-base intermediate with substrate of the active site.

This sequence belongs to the transaldolase family. Type 3B subfamily.

It localises to the cytoplasm. The catalysed reaction is D-sedoheptulose 7-phosphate + D-glyceraldehyde 3-phosphate = D-erythrose 4-phosphate + beta-D-fructose 6-phosphate. Its pathway is carbohydrate degradation; pentose phosphate pathway; D-glyceraldehyde 3-phosphate and beta-D-fructose 6-phosphate from D-ribose 5-phosphate and D-xylulose 5-phosphate (non-oxidative stage): step 2/3. Functionally, transaldolase is important for the balance of metabolites in the pentose-phosphate pathway. This chain is Probable transaldolase, found in Chelativorans sp. (strain BNC1).